We begin with the raw amino-acid sequence, 371 residues long: Cytochrome b (371 aa).

The next 4 membrane-spanning stretches (helical) occupy residues 32 to 52, 76 to 98, 113 to 133, and 179 to 199; these read VGFSLGFFICMQIICGVCLAW, FVIRSTHICFTSLLFFLLYVHIF, VWAVGFIIYIFIVVIGFIGYV, and LHVLHVLLPFVLILVIFMHLF. 2 residues coordinate heme b: histidine 82 and histidine 96. The heme b site is built by histidine 183 and histidine 197. Histidine 202 contacts a ubiquinone. The next 4 membrane-spanning stretches (helical) occupy residues 227–247, 296–316, 329–349, and 350–370; these read FYLRDMFLAFLILFYVVYFIF, LMVILLFSLFLFILNCILWFV, LILFYSIFMSGFLALYVILAY, and PIWMELQFWVLLLFMLVVCRL.

Belongs to the cytochrome b family. As to quaternary structure, the main subunits of complex b-c1 are: cytochrome b, cytochrome c1 and the Rieske protein. The cofactor is heme b.

The protein localises to the mitochondrion inner membrane. Component of the ubiquinol-cytochrome c reductase complex (complex III or cytochrome b-c1 complex) that is part of the mitochondrial respiratory chain. The b-c1 complex mediates electron transfer from ubiquinol to cytochrome c. Contributes to the generation of a proton gradient across the mitochondrial membrane that is then used for ATP synthesis. The sequence is that of Cytochrome b (MT-CYB) from Leishmania tarentolae (Sauroleishmania tarentolae).